Consider the following 177-residue polypeptide: Retrograde regulation protein 1 (177 aa).

Residues 1 to 24 (MSSIPAGTDPGSCGANFKNDRKRR) are disordered. Residues 11–96 (GSCGANFKND…TQAVEYISHL (86 aa)) enclose the bHLH domain. Phosphoserine is present on residues S50 and S52. 2 disordered regions span residues 52–82 (SNDT…KPNK) and 147–177 (LAAT…GNGS). T60 bears the Phosphothreonine mark. Residues 168–177 (GGYGEYGNGS) are compositionally biased toward gly residues.

In terms of assembly, binds DNA as a heterodimer with RTG3.

Its subcellular location is the nucleus. Functionally, required for a novel path of interorganelle communication between mitochondria, peroxisomes and the nucleus, thereby maintaining a functional metabolic interaction between the tricarboxylic acid and glyoxylate cycles. Transcription factor that regulates CIT2 gene expression. Binds to two identical sites oriented as inverted repeats 28 bp apart in a regulatory upstream activation sequence element (UASR) in the CIT2 promoter. The core binding site is 5'-GGTCAC-3'. The polypeptide is Retrograde regulation protein 1 (RTG1) (Saccharomyces cerevisiae (strain ATCC 204508 / S288c) (Baker's yeast)).